We begin with the raw amino-acid sequence, 347 residues long: Indole-3-glycerol phosphate lyase, chloroplastic (347 aa).

Disordered regions lie at residues 1–38 (MAFAPKTSSSSSLSSALQAAQSPPLLLRRMSSTATPRR) and 64–89 (APPQAPAPAPVPPKQAAAPAERRSRP). A chloroplast-targeting transit peptide spans 1-53 (MAFAPKTSSSSSLSSALQAAQSPPLLLRRMSSTATPRRRYDAAVVVTTTTTAR). Over residues 8–27 (SSSSSLSSALQAAQSPPLLL) the composition is skewed to low complexity. Residues 64–76 (APPQAPAPAPVPP) show a composition bias toward pro residues.

The protein belongs to the TrpA family. In terms of assembly, tetramer of two alpha and two beta chains for the tryptophan synthase activity. Homodimer of alpha chains for the indole-3-glycerol phosphate lyase activity.

It localises to the plastid. The protein localises to the chloroplast. It carries out the reaction (1S,2R)-1-C-(indol-3-yl)glycerol 3-phosphate = indole + D-glyceraldehyde 3-phosphate. The catalysed reaction is (1S,2R)-1-C-(indol-3-yl)glycerol 3-phosphate + L-serine = D-glyceraldehyde 3-phosphate + L-tryptophan + H2O. It participates in secondary metabolite biosynthesis; 2,4-dihydroxy-1,4-benzoxazin-3-one biosynthesis; 2,4-dihydroxy-1,4-benzoxazin-3-one from indoleglycerol phosphate: step 1/5. It functions in the pathway amino-acid biosynthesis; L-tryptophan biosynthesis; L-tryptophan from chorismate: step 5/5. Functionally, the alpha subunit is responsible for the aldol cleavage of indoleglycerol phosphate to indole and glyceraldehyde 3-phosphate. In bacteria, tryptophan synthase alpha (TSA) activity is almost completely dependent on formation of an active alpha2beta2 complex with tryptophan synthase beta (TSB), and indole is usually not released during tryptophan synthesis. In maize, the TSA homolog BX1 catalyzes the formation of free indole from indole-3-glycerol phosphate, independently of TSB. The protein is Indole-3-glycerol phosphate lyase, chloroplastic (BX1) of Zea mays (Maize).